Reading from the N-terminus, the 313-residue chain is Chemotaxis protein CheV2 (313 aa).

The region spanning 16-172 is the CheW-like domain; it reads EAQFLCFRLD…VEKMISDVFP (157 aa). Residues 193–313 enclose the Response regulatory domain; it reads LILIAEDSLS…IHEMLKKTLS (121 aa). D246 bears the 4-aspartylphosphate mark.

In terms of processing, phosphorylated; probably by transfer of CheAY phosphate group.

In terms of biological role, plays a role in chemotaxis signal transduction system in order to colonize the host stomach. May act as a phosphate sink to control the flow of phosphate to CheAY. The chain is Chemotaxis protein CheV2 from Helicobacter pylori (strain ATCC 700392 / 26695) (Campylobacter pylori).